The chain runs to 286 residues: Transcriptional regulator of yeast form adherence 4 (286 aa).

Low complexity-rich tracts occupy residues methionine 1 to serine 29 and leucine 37 to asparagine 65. Residues methionine 1–proline 71 are disordered. C2H2-type zinc fingers lie at residues phenylalanine 78 to histidine 101 and phenylalanine 107 to histidine 130. Residues histidine 146–histidine 260 are disordered. 2 stretches are compositionally biased toward low complexity: residues glycine 156–asparagine 165 and serine 228–threonine 244. Polar residues predominate over residues asparagine 245–histidine 260.

Its subcellular location is the nucleus. In terms of biological role, transcription factor required for yeast cell adherence to silicone substrate. The protein is Transcriptional regulator of yeast form adherence 4 (TRY4) of Candida albicans (strain SC5314 / ATCC MYA-2876) (Yeast).